We begin with the raw amino-acid sequence, 116 residues long: Protein Rev (116 aa).

Ser5 and Ser8 each carry phosphoserine; by host CK2. Residues 18-26 form a homomultimerization region; it reads LIKFLYQSN. Residues 23–49 are disordered; sequence YQSNPPPNPEGTRQARRNRRRRWRERQ. Positions 34 to 50 match the Nuclear localization signal and RNA-binding (RRE) motif; the sequence is TRQARRNRRRRWRERQR. Positions 36–47 are enriched in basic residues; that stretch reads QARRNRRRRWRE. Positions 73–84 match the Nuclear export signal and binding to XPO1 motif; the sequence is LQLPPLERLTLD. Phosphoserine; by host is present on residues Ser92 and Ser99.

The protein belongs to the HIV-1 REV protein family. Homomultimer; when bound to the RRE. Multimeric assembly is essential for activity and may involve XPO1. Binds to human KPNB1, XPO1, TNPO1, RANBP5 and IPO7. Interacts with the viral Integrase. Interacts with human KHDRBS1. Interacts with human NAP1; this interaction decreases Rev multimerization and stimulates its activity. Interacts with human DEAD-box helicases DDX3 and DDX24; these interactions may serve for viral RNA export to the cytoplasm and packaging, respectively. Interacts with human PSIP1; this interaction may inhibit HIV-1 DNA integration by promoting dissociation of the Integrase-LEDGF/p75 complex. Asymmetrically arginine dimethylated at one site by host PRMT6. Methylation impairs the RNA-binding activity and export of viral RNA from the nucleus to the cytoplasm. Post-translationally, phosphorylated by protein kinase CK2. Presence of, and maybe binding to the N-terminus of the regulatory beta subunit of CK2 is necessary for CK2-mediated Rev's phosphorylation.

It localises to the host nucleus. The protein localises to the host nucleolus. Its subcellular location is the host cytoplasm. Escorts unspliced or incompletely spliced viral pre-mRNAs (late transcripts) out of the nucleus of infected cells. These pre-mRNAs carry a recognition sequence called Rev responsive element (RRE) located in the env gene, that is not present in fully spliced viral mRNAs (early transcripts). This function is essential since most viral proteins are translated from unspliced or partially spliced pre-mRNAs which cannot exit the nucleus by the pathway used by fully processed cellular mRNAs. Rev itself is translated from a fully spliced mRNA that readily exits the nucleus. Rev's nuclear localization signal (NLS) binds directly to KPNB1/Importin beta-1 without previous binding to KPNA1/Importin alpha-1. KPNB1 binds to the GDP bound form of RAN (Ran-GDP) and targets Rev to the nucleus. In the nucleus, the conversion from Ran-GDP to Ran-GTP dissociates Rev from KPNB1 and allows Rev's binding to the RRE in viral pre-mRNAs. Rev multimerization on the RRE via cooperative assembly exposes its nuclear export signal (NES) to the surface. Rev can then form a complex with XPO1/CRM1 and Ran-GTP, leading to nuclear export of the complex. Conversion from Ran-GTP to Ran-GDP mediates dissociation of the Rev/RRE/XPO1/RAN complex, so that Rev can return to the nucleus for a subsequent round of export. Beside KPNB1, also seems to interact with TNPO1/Transportin-1, RANBP5/IPO5 and IPO7/RANBP7 for nuclear import. The nucleoporin-like HRB/RIP is an essential cofactor that probably indirectly interacts with Rev to release HIV RNAs from the perinuclear region to the cytoplasm. The polypeptide is Protein Rev (Human immunodeficiency virus type 1 group M subtype B (isolate HXB3) (HIV-1)).